The chain runs to 115 residues: DNA-directed RNA polymerase II subunit RPB11-b1 (115 aa).

It belongs to the archaeal Rpo11/eukaryotic RPB11/RPC19 RNA polymerase subunit family. In terms of assembly, component of the RNA polymerase II (Pol II) complex consisting of 12 subunits. Ubiquitously expressed.

The protein localises to the nucleus. In terms of biological role, DNA-dependent RNA polymerase catalyzes the transcription of DNA into RNA using the four ribonucleoside triphosphates as substrates. Component of RNA polymerase II which synthesizes mRNA precursors and many functional non-coding RNAs. Pol II is the central component of the basal RNA polymerase II transcription machinery. It is composed of mobile elements that move relative to each other. RPB11 is part of the core element with the central large cleft. The protein is DNA-directed RNA polymerase II subunit RPB11-b1 (POLR2J2) of Homo sapiens (Human).